Consider the following 147-residue polypeptide: 3-dehydroquinate dehydratase (147 aa).

Tyr24 acts as the Proton acceptor in catalysis. Substrate contacts are provided by Asn75, His81, and Asp88. His101 serves as the catalytic Proton donor. Substrate-binding positions include Ile102 to Ser103 and Arg112.

It belongs to the type-II 3-dehydroquinase family. In terms of assembly, homododecamer.

It catalyses the reaction 3-dehydroquinate = 3-dehydroshikimate + H2O. It functions in the pathway metabolic intermediate biosynthesis; chorismate biosynthesis; chorismate from D-erythrose 4-phosphate and phosphoenolpyruvate: step 3/7. Its function is as follows. Catalyzes a trans-dehydration via an enolate intermediate. This Cereibacter sphaeroides (strain ATCC 17023 / DSM 158 / JCM 6121 / CCUG 31486 / LMG 2827 / NBRC 12203 / NCIMB 8253 / ATH 2.4.1.) (Rhodobacter sphaeroides) protein is 3-dehydroquinate dehydratase.